We begin with the raw amino-acid sequence, 652 residues long: Drebrin (652 aa).

Residue Ala-2 is modified to N-acetylalanine. An ADF-H domain is found at 5-134 (GFAAHRLELL…DPGAIGQRLS (130 aa)). 2 stretches are compositionally biased toward basic and acidic residues: residues 211–236 (MEQE…EEHR) and 288–298 (DNPREFFKQQE). Disordered stretches follow at residues 211 to 350 (MEQE…YITC) and 371 to 652 (SAAG…GGGL). Positions 328–340 (SGPPSSSSSSSSP) are enriched in low complexity. Pro residues predominate over residues 507–517 (PDTPAGPPVPP). Composition is skewed to acidic residues over residues 540 to 554 (QHEE…EEAT) and 640 to 652 (PLPE…GGGL).

As to expression, brain neurons.

It localises to the cytoplasm. It is found in the cell projection. Its subcellular location is the dendrite. The protein resides in the cell cortex. The protein localises to the cell junction. It localises to the growth cone. Its function is as follows. Actin cytoskeleton-organizing protein that plays a role in the formation of cell projections. Plays a role in dendritic spine morphogenesis and organization, including the localization of the dopamine receptor DRD1 to the dendritic spines. Involved in synaptic plasticity. The protein is Drebrin (DBN1) of Gallus gallus (Chicken).